The sequence spans 323 residues: L-lactate dehydrogenase (323 aa).

V11, D32, and Y63 together coordinate NAD(+). Substrate contacts are provided by Q80 and R86. NAD(+) contacts are provided by residues S99, 116-118, and S141; that span reads VSN. A substrate-binding site is contributed by 118-121; the sequence is NPVD. A substrate-binding site is contributed by 146 to 149; sequence DTAR. Residues R151 and H166 each coordinate beta-D-fructose 1,6-bisphosphate. Residue H173 is the Proton acceptor of the active site. Y221 bears the Phosphotyrosine mark. T230 is a binding site for substrate.

Belongs to the LDH/MDH superfamily. LDH family. As to quaternary structure, homotetramer.

The protein resides in the cytoplasm. It carries out the reaction (S)-lactate + NAD(+) = pyruvate + NADH + H(+). It functions in the pathway fermentation; pyruvate fermentation to lactate; (S)-lactate from pyruvate: step 1/1. Its activity is regulated as follows. Allosterically activated by fructose 1,6-bisphosphate (FBP). Its function is as follows. Catalyzes the conversion of lactate to pyruvate. The protein is L-lactate dehydrogenase of Kosmotoga olearia (strain ATCC BAA-1733 / DSM 21960 / TBF 19.5.1).